A 241-amino-acid polypeptide reads, in one-letter code: Uridylate kinase (241 aa).

15-18 provides a ligand contact to ATP; the sequence is KMSG. The interval 23 to 28 is involved in allosteric activation by GTP; sequence GAEGFG. Gly-57 lines the UMP pocket. ATP contacts are provided by Gly-58 and Arg-62. UMP-binding positions include Asp-77 and 138 to 145; that span reads TGNPLFTT. Residues Thr-165, Phe-171, and Asp-174 each contribute to the ATP site.

It belongs to the UMP kinase family. Homohexamer.

The protein localises to the cytoplasm. It catalyses the reaction UMP + ATP = UDP + ADP. The protein operates within pyrimidine metabolism; CTP biosynthesis via de novo pathway; UDP from UMP (UMPK route): step 1/1. Allosterically activated by GTP. Inhibited by UTP. In terms of biological role, catalyzes the reversible phosphorylation of UMP to UDP. This is Uridylate kinase from Blochmanniella pennsylvanica (strain BPEN).